A 417-amino-acid chain; its full sequence is Hydrogen cyanide synthase subunit HcnC (417 aa).

Positions 1 to 18 (MIKHYDVVIAGGGVIGAS) are cleaved as a signal peptide. 7–21 (VVIAGGGVIGASCAY) lines the FAD pocket. Residue Cys-19 is the site of N-palmitoyl cysteine attachment. Cys-19 carries S-diacylglycerol cysteine lipidation. The helical transmembrane segment at 46–66 (SAGGLWAIGESVGLGCGVIFF) threads the bilayer.

Belongs to the FAD-dependent glycerol-3-phosphate dehydrogenase family. In terms of assembly, heterotrimer of HcnA, HcnB and HcnC.

The protein localises to the cell membrane. The enzyme catalyses glycine + 2 A = hydrogen cyanide + 2 AH2 + CO2. In terms of biological role, a three-component membrane-bound flavoenzyme that catalyzes the formation of hydrogen cyanide, a secondary metabolite, by transfer of electrons to a cyanide-resistant branch of the aerobic respiratory chain. Contributes to suppression of black root rot of tobacco. This is Hydrogen cyanide synthase subunit HcnC from Pseudomonas protegens (strain DSM 19095 / LMG 27888 / CFBP 6595 / CHA0).